A 396-amino-acid polypeptide reads, in one-letter code: Ribosomal RNA large subunit methyltransferase I (396 aa).

Residues 2–81 (TVRLILAKGR…EVIDCAFFIR (80 aa)) form the PUA domain.

Belongs to the methyltransferase superfamily. RlmI family.

It localises to the cytoplasm. The catalysed reaction is cytidine(1962) in 23S rRNA + S-adenosyl-L-methionine = 5-methylcytidine(1962) in 23S rRNA + S-adenosyl-L-homocysteine + H(+). Specifically methylates the cytosine at position 1962 (m5C1962) of 23S rRNA. The chain is Ribosomal RNA large subunit methyltransferase I from Yersinia pseudotuberculosis serotype O:1b (strain IP 31758).